The chain runs to 182 residues: Capsid protein (182 aa).

The segment at 136-182 (NAPILSTLPETTVVRRRRPSGRRTPSPRRRRSQSPRRRRSQSPASSC) is disordered. Basic residues predominate over residues 149–175 (VRRRRPSGRRTPSPRRRRSQSPRRRRS). Residues 157–174 (RRTPSPRRRRSQSPRRRR) carry the Bipartite nuclear localization signal motif. Phosphoserine; by host occurs at positions 161 and 169. Repeat copies occupy residues 161-168 (SPRRRRSQ) and 169-176 (SPRRRRSQ). A 2 X 8 AA repeats of S-P-R-R-R-[PR]-S-Q region spans residues 161–176 (SPRRRRSQSPRRRRSQ). Residues 176–182 (QSPASSC) form an RNA binding region.

Belongs to the orthohepadnavirus core antigen family. As to quaternary structure, homodimerizes, then multimerizes. Interacts with cytosol exposed regions of viral L glycoprotein present in the reticulum-to-Golgi compartment. Interacts with human FLNB. Phosphorylated form interacts with host importin alpha; this interaction depends on the exposure of the NLS, which itself depends upon genome maturation and/or phosphorylation of the capsid protein. Interacts with host NUP153. Phosphorylated by host SRPK1, SRPK2, and maybe protein kinase C or GAPDH. Phosphorylation is critical for pregenomic RNA packaging. Protein kinase C phosphorylation is stimulated by HBx protein and may play a role in transport of the viral genome to the nucleus at the late step during the viral replication cycle.

Its subcellular location is the virion. It is found in the host cytoplasm. Functionally, self assembles to form an icosahedral capsid. Most capsids appear to be large particles with an icosahedral symmetry of T=4 and consist of 240 copies of capsid protein, though a fraction forms smaller T=3 particles consisting of 180 capsid proteins. Entering capsids are transported along microtubules to the nucleus. Phosphorylation of the capsid is thought to induce exposure of nuclear localization signal in the C-terminal portion of the capsid protein that allows binding to the nuclear pore complex via the importin (karyopherin-) alpha and beta. Capsids are imported in intact form through the nuclear pore into the nuclear basket, where it probably binds NUP153. Only capsids that contain the mature viral genome can release the viral DNA and capsid protein into the nucleoplasm. Immature capsids get stuck in the basket. Capsids encapsulate the pre-genomic RNA and the P protein. Pre-genomic RNA is reverse-transcribed into DNA while the capsid is still in the cytoplasm. The capsid can then either be directed to the nucleus, providing more genomes for transcription, or bud through the endoplasmic reticulum to provide new virions. The protein is Capsid protein of Woolly monkey hepatitis B virus (isolate Louisville) (WMHBV).